An 89-amino-acid polypeptide reads, in one-letter code: Diphthamide biosynthesis protein 3 (89 aa).

The region spanning 5-61 is the DPH-type MB domain; sequence FYDEIELEDMSYDDEKDVFHYPCPCGDRFEITRQQLKDAEDVARCPSCSLIIRVVFD. Positions 27, 29, 49, and 52 each coordinate Fe cation.

The protein belongs to the DPH3 family. As to quaternary structure, component of the 2-(3-amino-3-carboxypropyl)histidine synthase complex composed of DPH1, DPH2, DPH3 and a NADH-dependent reductase, predominantly CBR1. The cofactor is Fe(2+).

Its subcellular location is the cytoplasm. It is found in the nucleus. The enzyme catalyses [3Fe-4S](1+)-[protein] + Fe(2+)-[Dph3] = [3Fe-4S](0)-[protein] + Fe(3+)-[Dph3]. The catalysed reaction is 2 [3Fe-4S](0)-[protein] + 2 Fe(2+)-[Dph3] + NADH = 2 [4Fe-4S](1+)-[protein] + 2 [Dph3] + NAD(+) + H(+). It functions in the pathway protein modification; peptidyl-diphthamide biosynthesis. In terms of biological role, required for the first step of diphthamide biosynthesis, a post-translational modification of histidine which occurs in elongation factor 2. DPH1 and DPH2 transfer a 3-amino-3-carboxypropyl (ACP) group from S-adenosyl-L-methionine (SAM) to a histidine residue, the reaction is assisted by a reduction system comprising KTI11/DPH3 and a NADH-dependent reductase, predominantly CBR1. Acts as an electron donor to reduce the Fe-S cluster in DPH1-DPH2 keeping the [4Fe-4S] clusters in the active and reduced state. Restores iron to DPH1-DPH2 iron-sulfur clusters which have degraded from [4Fe-4S] to [3Fe-4S] by donating an iron atom to reform [4Fe-4S] clusters, in a manner dependent on the presence of elongation factor 2 and SAM. Associates with the elongator complex and is required for tRNA Wobble base modifications mediated by the elongator complex. The elongator complex is required for multiple tRNA modifications, including mcm5U (5-methoxycarbonylmethyl uridine), mcm5s 2U (5-methoxycarbonylmethyl-2-thiouridine), and ncm5U (5-carbamoylmethyl uridine). The polypeptide is Diphthamide biosynthesis protein 3 (DPH3) (Mycosarcoma maydis (Corn smut fungus)).